Here is a 1394-residue protein sequence, read N- to C-terminus: Leucine-rich PPR motif-containing protein, mitochondrial (1394 aa).

The N-terminal 59 residues, 1–59 (MAALLRSARWLLRAGAAPRLPLSLRLLPGGPGRLHAASYLPAARAGPVAGGLLSPARLY), are a transit peptide targeting the mitochondrion. PPR repeat units lie at residues 126–160 (LLRS…GAVY), 161–195 (DVSH…NIQP), 196–230 (NRVT…DLPV), 231–265 (TEAV…GIEP), 266–300 (GPDT…ELHL), 301–335 (MDRD…RRYI), 403–437 (HSFP…GFPI), and 438–472 (RPHY…GVHP). N6-acetyllysine is present on residues Lys155, Lys187, and Lys226. Lys292 is subject to N6-acetyllysine. An N6-acetyllysine mark is found at Lys463 and Lys613. 6 PPR repeats span residues 678-709 (IRDV…ESDM), 710-746 (VTGG…SAVL), 747-784 (DTGK…IKDT), 785-820 (TALS…LAEP), 821-856 (STNI…KVLP), and 954-988 (RDQM…NVIP). Residues 712 to 1067 (GGYAALINLC…AKEQNIVFNA (356 aa)) are interaction with BECN1 and Aedes aegypti venom allergen-1. N6-acetyllysine occurs at positions 726 and 750. Phosphoserine occurs at positions 1026, 1027, and 1029. PPR repeat units follow at residues 1031 to 1065 (TEPD…NIVF), 1066 to 1102 (NAET…GFTL), 1103 to 1137 (NDAA…QQTP), 1138 to 1175 (SRLA…IGLS), 1176 to 1210 (KMVF…ENKV), and 1317 to 1351 (KEEA…NTKL). Residues 1121–1394 (KEAVTTLKTV…QLRKLRENSS (274 aa)) are RNA-binding. Thr1136 carries the phosphothreonine modification. Ser1138 is subject to Phosphoserine.

In terms of assembly, component of mRNP complexes associated with HNRPA1. Component of the complex, at least composed of LRPPRC, BECN1 and BCL2; the interactions prevent BECN1 from forming an autophagy-inducing complex with PIK3C3. Interacts with CECR2, HEBP2, MAP1S and UXT. Interacts with PPARGC1A. Interacts with FOXO1. Interacts (via N-terminus) with EIF4E; the interaction promotes association of EIF4E with 4ESE-containing mRNAs. Interacts with exportin XPO1/CRM1; interacts both alone and in complex with EIF4E and 4ESE-containing mRNAs to form an EIF4E-dependent mRNA export complex. Interacts with importin IPO8; the interaction occurs when LRPPRC is in its RNA-free form and returns LRPPRC to the nucleus for further export rounds. Interacts with BECN1. Interacts with Aedes aegypti venom allergen-1; the interaction interrupts BECN1 and LRPPRC association. Expressed ubiquitously. Expression is highest in heart, skeletal muscle, kidney and liver, intermediate in brain, non-mucosal colon, spleen and placenta, and lowest in small intestine, thymus, lung and peripheral blood leukocytes.

It localises to the mitochondrion. It is found in the nucleus. Its subcellular location is the nucleoplasm. The protein localises to the nucleus inner membrane. The protein resides in the nucleus outer membrane. Its function is as follows. May play a role in RNA metabolism in both nuclei and mitochondria. In the nucleus binds to HNRPA1-associated poly(A) mRNAs and is part of nmRNP complexes at late stages of mRNA maturation which are possibly associated with nuclear mRNA export. Positively modulates nuclear export of mRNAs containing the EIF4E sensitivity element (4ESE) by binding simultaneously to both EIF4E and the 4ESE and acting as a platform for assembly for the RNA export complex. Also binds to exportin XPO1/CRM1 to engage the nuclear pore and traffic the bound mRNAs to the cytoplasm. May bind mature mRNA in the nucleus outer membrane. In mitochondria binds to poly(A) mRNA. Plays a role in translation or stability of mitochondrially encoded cytochrome c oxidase (COX) subunits. May be involved in transcription regulation. Cooperates with PPARGC1A to regulate certain mitochondrially encoded genes and gluconeogenic genes and may regulate docking of PPARGC1A to transcription factors. Seems to be involved in the transcription regulation of the multidrug-related genes MDR1 and MVP. Part of a nuclear factor that binds to the invMED1 element of MDR1 and MVP gene promoters. Binds single-stranded DNA. Required for maintaining mitochondrial potential. Suppresses the initiation of basal levels of autophagy and mitophagy by sustaining BCL2 levels. The chain is Leucine-rich PPR motif-containing protein, mitochondrial (LRPPRC) from Homo sapiens (Human).